The chain runs to 443 residues: MSEMTPREIVSELDGYIVGQHNAKRAVAIALRNRWRRMQLDEALRHEVTPKNILMIGPTGVGKTEIARRLAKLANAPFIKVEATKFTEVGYVGKEVDSIIRDLTDAAVKMVRLQSIEQNRFRAEELAEERVLDVLIPPAKNNWGQPEESGEPSSARQNFRKKLREGQLDEKEIEINLAAAPMGVEIMAPPGMEEMTNQLQSMFKNLAGQKQKPRKIKIKEAMKLLVEEEAAKLVNPEELKEKAIEAVEQHGIVFIDEIDKICKRDEVSGLDVSREGVQRDLLPLVEGCTVSTKHGMVKTDHILFIASGAFQVSSPSDLIPELQGRLPIRVELEALTTEDFERILTEPSASLTTQYIALMATEGVSITFTEDGIKRIAEAAWQVNECTENIGARRLHTVLERLMEDISYDASEWNGKTISIDADYVHGHLDELVSDEDLSRFIL.

ATP is bound by residues valine 18 and 60–65; that span reads GVGKTE. Positions 139–160 are disordered; that stretch reads AKNNWGQPEESGEPSSARQNFR. ATP is bound by residues aspartate 256, glutamate 321, and arginine 393.

Belongs to the ClpX chaperone family. HslU subfamily. In terms of assembly, a double ring-shaped homohexamer of HslV is capped on each side by a ring-shaped HslU homohexamer. The assembly of the HslU/HslV complex is dependent on binding of ATP.

The protein resides in the cytoplasm. Functionally, ATPase subunit of a proteasome-like degradation complex; this subunit has chaperone activity. The binding of ATP and its subsequent hydrolysis by HslU are essential for unfolding of protein substrates subsequently hydrolyzed by HslV. HslU recognizes the N-terminal part of its protein substrates and unfolds these before they are guided to HslV for hydrolysis. This chain is ATP-dependent protease ATPase subunit HslU, found in Sodalis glossinidius (strain morsitans).